A 313-amino-acid chain; its full sequence is uncharacterized protein (313 aa).

The next 6 membrane-spanning stretches (helical) occupy residues 16–36 (AGTW…AFLA), 106–126 (FTIL…ANEF), 155–175 (FGLL…LIFF), 208–228 (LSES…SAVF), 233–253 (LAVG…AFIA), and 286–306 (FSLV…FGIF).

It localises to the cell membrane. This is an uncharacterized protein from Bacillus subtilis (strain 168).